The chain runs to 790 residues: Penicillin-binding protein 1A (790 aa).

The Cytoplasmic segment spans residues 1–6 (MYKSLF). The chain crosses the membrane as a helical; Signal-anchor for type II membrane protein span at residues 7 to 27 (FCLKIFAVLILVGCGITAYII). Topologically, residues 28–790 (YHYSRDLPDY…SKEDQSQEIY (763 aa)) are periplasmic. The segment at 49–220 (TRIYSHDGKL…SELNPERNYA (172 aa)) is transglycosylase. Glutamate 87 (proton donor; for transglycosylase activity) is an active-site residue. Positions 398-711 (DVIVVEPIKD…SNVVLPIFID (314 aa)) are transpeptidase. Catalysis depends on serine 457, which acts as the Acyl-ester intermediate; for transpeptidase activity.

This sequence in the N-terminal section; belongs to the glycosyltransferase 51 family. In the C-terminal section; belongs to the transpeptidase family.

Its subcellular location is the cell inner membrane. It carries out the reaction [GlcNAc-(1-&gt;4)-Mur2Ac(oyl-L-Ala-gamma-D-Glu-L-Lys-D-Ala-D-Ala)](n)-di-trans,octa-cis-undecaprenyl diphosphate + beta-D-GlcNAc-(1-&gt;4)-Mur2Ac(oyl-L-Ala-gamma-D-Glu-L-Lys-D-Ala-D-Ala)-di-trans,octa-cis-undecaprenyl diphosphate = [GlcNAc-(1-&gt;4)-Mur2Ac(oyl-L-Ala-gamma-D-Glu-L-Lys-D-Ala-D-Ala)](n+1)-di-trans,octa-cis-undecaprenyl diphosphate + di-trans,octa-cis-undecaprenyl diphosphate + H(+). The catalysed reaction is Preferential cleavage: (Ac)2-L-Lys-D-Ala-|-D-Ala. Also transpeptidation of peptidyl-alanyl moieties that are N-acyl substituents of D-alanine.. It functions in the pathway cell wall biogenesis; peptidoglycan biosynthesis. Functionally, cell wall formation. Synthesis of cross-linked peptidoglycan from the lipid intermediates. The enzyme has a penicillin-insensitive transglycosylase N-terminal domain (formation of linear glycan strands) and a penicillin-sensitive transpeptidase C-terminal domain (cross-linking of the peptide subunits). In Rickettsia felis (strain ATCC VR-1525 / URRWXCal2) (Rickettsia azadi), this protein is Penicillin-binding protein 1A (mrcA).